The following is a 313-amino-acid chain: Adhesin MafA 2 (313 aa).

The N-terminal stretch at methionine 1–alanine 14 is a signal peptide. Cysteine 15 carries N-palmitoyl cysteine lipidation. Cysteine 15 carries the S-diacylglycerol cysteine lipid modification. A compositionally biased stretch (polar residues) spans glycine 282–glycine 297. A disordered region spans residues glycine 282–glycine 313.

The protein belongs to the MafA family.

It localises to the cell outer membrane. The chain is Adhesin MafA 2 (mafA2) from Neisseria meningitidis serogroup A / serotype 4A (strain DSM 15465 / Z2491).